A 118-amino-acid polypeptide reads, in one-letter code: UPF0295 protein BC_0520 (118 aa).

The next 2 membrane-spanning stretches (helical) occupy residues 12–32 and 43–63; these read IRTF…LGVF and FMMV…WIGM.

This sequence belongs to the UPF0295 family.

The protein resides in the cell membrane. In Bacillus cereus (strain ATCC 14579 / DSM 31 / CCUG 7414 / JCM 2152 / NBRC 15305 / NCIMB 9373 / NCTC 2599 / NRRL B-3711), this protein is UPF0295 protein BC_0520.